A 262-amino-acid polypeptide reads, in one-letter code: Fibroin light chain (262 aa).

A signal peptide spans 1–16 (MKPIFLVLLVATSAYA). Serine 19 carries the N-acetylserine; in short form modification. The cysteines at positions 101 and 160 are disulfide-linked.

As to quaternary structure, silk fibroin elementary unit consists in a disulfide-linked heavy and light chain and a p25 glycoprotein in molar ratios of 6:6:1. This results in a complex of approximately 2.3 MDa. In terms of processing, the interchain disulfide bridge is essential for the intracellular transport and secretion of fibroin. Post-translationally, partially N-terminally processed to yield a short form which lacks the first two residues of the long form. Produced exclusively in the posterior (PSG) section of silk glands, which are essentially modified salivary glands.

The protein resides in the secreted. It is likely that the major role of L-chain is to prevent the retention of H-chain in ER by forming the disulfide linkage. In Bombyx mori (Silk moth), this protein is Fibroin light chain (FIBL).